The primary structure comprises 234 residues: Glucosamine-6-phosphate deaminase (234 aa).

Asp62 acts as the Proton acceptor; for enolization step in catalysis. Asn128 serves as the catalytic For ring-opening step. His130 (proton acceptor; for ring-opening step) is an active-site residue. Glu135 acts as the For ring-opening step in catalysis.

The protein belongs to the glucosamine/galactosamine-6-phosphate isomerase family. NagB subfamily.

The catalysed reaction is alpha-D-glucosamine 6-phosphate + H2O = beta-D-fructose 6-phosphate + NH4(+). The protein operates within amino-sugar metabolism; N-acetylneuraminate degradation; D-fructose 6-phosphate from N-acetylneuraminate: step 5/5. In terms of biological role, catalyzes the reversible isomerization-deamination of glucosamine 6-phosphate (GlcN6P) to form fructose 6-phosphate (Fru6P) and ammonium ion. This Streptococcus pyogenes serotype M3 (strain ATCC BAA-595 / MGAS315) protein is Glucosamine-6-phosphate deaminase.